The sequence spans 310 residues: MKLTFLGTGAAIPTKYRAHPSISLKFDGEIFLFDCGENTQRQIIFTDVSPMKINNIFISHLHGDHILGIPGLMQSIAFQGRTKPLNIYGPKETAKMIENILNVGYHSIDYPINVYEISAKSPEKIISSDNYEVFSFPVVHSVPALAYVFKQVKKPRMDLEKVNKLGIEIGPDLKRLKDGFNIELNGKIITPDDVTVPPKKGICVGYSGDTIPLNEFAEFLKELKCTTLIHEATFDKSMDKNAKETLHSTVSDALNIAKLSGVNTVILTHISARYDEISAYEKDIVEFKAEHPDLHILIAEDLMEYSLKGK.

7 residues coordinate Zn(2+): His60, His62, Asp64, His65, His140, Asp209, and His269. Asp64 functions as the Proton acceptor in the catalytic mechanism.

The protein belongs to the RNase Z family. As to quaternary structure, homodimer. Zn(2+) is required as a cofactor.

The catalysed reaction is Endonucleolytic cleavage of RNA, removing extra 3' nucleotides from tRNA precursor, generating 3' termini of tRNAs. A 3'-hydroxy group is left at the tRNA terminus and a 5'-phosphoryl group is left at the trailer molecule.. Its function is as follows. Zinc phosphodiesterase, which displays some tRNA 3'-processing endonuclease activity. Probably involved in tRNA maturation, by removing a 3'-trailer from precursor tRNA. The protein is Ribonuclease Z of Methanococcus maripaludis (strain C7 / ATCC BAA-1331).